The following is a 156-amino-acid chain: ATP synthase subunit b (156 aa).

Residues 7–29 traverse the membrane as a helical segment; sequence LLGQAISFALFVWFCIKFVWPPL.

This sequence belongs to the ATPase B chain family. In terms of assembly, F-type ATPases have 2 components, F(1) - the catalytic core - and F(0) - the membrane proton channel. F(1) has five subunits: alpha(3), beta(3), gamma(1), delta(1), epsilon(1). F(0) has three main subunits: a(1), b(2) and c(10-14). The alpha and beta chains form an alternating ring which encloses part of the gamma chain. F(1) is attached to F(0) by a central stalk formed by the gamma and epsilon chains, while a peripheral stalk is formed by the delta and b chains.

The protein resides in the cell inner membrane. Functionally, f(1)F(0) ATP synthase produces ATP from ADP in the presence of a proton or sodium gradient. F-type ATPases consist of two structural domains, F(1) containing the extramembraneous catalytic core and F(0) containing the membrane proton channel, linked together by a central stalk and a peripheral stalk. During catalysis, ATP synthesis in the catalytic domain of F(1) is coupled via a rotary mechanism of the central stalk subunits to proton translocation. Component of the F(0) channel, it forms part of the peripheral stalk, linking F(1) to F(0). The chain is ATP synthase subunit b from Shewanella sp. (strain W3-18-1).